A 728-amino-acid polypeptide reads, in one-letter code: Ribosome biogenesis protein bop1-A (728 aa).

The tract at residues 1 to 114 (MKRGSQGEAG…ENDSSDEEDI (114 aa)) is disordered. Positions 55-67 (SDDEEDHWSEEEE) are enriched in acidic residues. The segment covering 68-77 (NPGKSPKEII) has biased composition (basic and acidic residues). WD repeat units follow at residues 393-432 (GHKDLVRCISVSPSGQWLVSGSDDCSVRFWEVSTGRCMKS), 434-474 (VLEG…RLLC), 514-556 (KHQK…SQNP), 559-597 (KNKGQVQKVLFHPTRPFFFVATQRYVRVYNLLKQELTKK), 600-639 (TNCKWVSSIAVHPAGDNLICGSYDSKLAWFDMDLSTKPYK), 643-682 (HHKKALRAVSFHKSYPLFASGSDDGSVIVCHGMVYNDLLQ), and 698-728 (HRDLGVLDVTFHPTQPWVFSSGADATIRLFT).

This sequence belongs to the WD repeat BOP1/ERB1 family. In terms of assembly, component of the PeBoW complex, composed of bop1, pes1 and wdr12. The complex is held together by bop1, which interacts with pes1 via its N-terminal domain and with wdr12 via a high-affinity interaction between the seven-bladed beta-propeller domains of the 2 proteins. The PeBoW complex associates with the 66S pre-ribosome.

The protein localises to the nucleus. It localises to the nucleolus. The protein resides in the nucleoplasm. Component of the PeBoW complex, which is required for maturation of 28S and 5.8S ribosomal RNAs and formation of the 60S ribosome. This chain is Ribosome biogenesis protein bop1-A (bop1-a), found in Xenopus laevis (African clawed frog).